Here is a 1219-residue protein sequence, read N- to C-terminus: N-acetylglucosamine-1-phosphotransferase subunits alpha/beta (1219 aa).

Residues 27–47 traverse the membrane as a helical segment; that stretch reads LCFGGLVLMIVSAFQFGEVVV. 5 N-linked (GlcNAc...) asparagine glycosylation sites follow: N88, N119, N153, N292, and N381. 4 disulfides stabilise this stretch: C443–C466, C457–C473, C508–C531, and C522–C538. LNR repeat units follow at residues 443–478 and 508–538; these read CAEG…GSSR and CNQG…VGDC. D454 contacts Ca(2+). Residue N462 is glycosylated (N-linked (GlcNAc...) asparagine). Positions 469, 472, 519, 534, and 537 each coordinate Ca(2+). 8 N-linked (GlcNAc...) asparagine glycosylation sites follow: N554, N610, N617, N645, N696, N726, N823, and N974. Residues 640-666 form a disordered region; sequence ELPKSNTSTPVRDKEEEPKPTVATPEP. The DMAP1-binding domain occupies 696 to 804; that stretch reads NETLLPDEVK…DDVTTKAQSR (109 aa). The EF-hand domain occupies 970–1005; the sequence is VQQLNISEVFDEIDTDHSGVLSDREIRTLATRIHEL. Ca(2+) is bound by residues D983, D985, S987, and E994. N1021, N1029, and N1094 each carry an N-linked (GlcNAc...) asparagine glycan. The helical transmembrane segment at 1180–1200 threads the bilayer; it reads VLVTLVVFTVMSFFAEQLVML.

This sequence belongs to the stealth family. In terms of assembly, hexamer of two alpha, two beta and two gamma (GNPTG) subunits; disulfide-linked. The alpha and/or the beta subunits of the enzyme constitute the catalytic subunits. Post-translationally, the alpha- and beta-subunits are generated by a proteolytic cleavage by mbtps1 protease at the Gln-893-Asp-894 bond.

Its subcellular location is the golgi apparatus membrane. The catalysed reaction is N(4)-[alpha-D-mannosyl-(1-&gt;2)-alpha-D-mannosyl-(glycan)]-L-asparaginyl-[protein] + UDP-N-acetyl-alpha-D-glucosamine = N(4)-[6-(N-acetyl-alpha-D-glucosaminyl-1-phospho)-alpha-D-mannosyl-(1-&gt;2)-alpha-D-mannosyl-(glycan)]-L-asparaginyl-[protein] + UMP + H(+). Its function is as follows. Catalyzes the formation of mannose 6-phosphate (M6P) markers on high mannose type oligosaccharides in the Golgi apparatus. M6P residues are required to bind to the M6P receptors (MPR), which mediate the vesicular transport of lysosomal enzymes to the endosomal/prelysosomal compartment. This chain is N-acetylglucosamine-1-phosphotransferase subunits alpha/beta (gnptab), found in Danio rerio (Zebrafish).